Reading from the N-terminus, the 129-residue chain is UPF0102 protein Mrad2831_2938 (129 aa).

The protein belongs to the UPF0102 family.

This chain is UPF0102 protein Mrad2831_2938, found in Methylobacterium radiotolerans (strain ATCC 27329 / DSM 1819 / JCM 2831 / NBRC 15690 / NCIMB 10815 / 0-1).